The sequence spans 602 residues: Arp2/3 complex-activating protein rickA (602 aa).

Disordered regions lie at residues 307 to 484 (SSLA…AGPK), 516 to 535 (VEFDPNTGKPVAHSHSKPVQ), and 555 to 602 (MSDS…SFVK). Positions 318–442 (TPPPPLPGNN…IPPPPPPPMA (125 aa)) are enriched in pro residues. WH2 domains are found at residues 472 to 489 (DTSDLMREIAGPKKLRKV) and 499 to 516 (SRDLLLQSIRGEHKLKKV). Residues 475 to 484 (DLMREIAGPK) show a composition bias toward basic and acidic residues. Residues 537-570 (VNKLSGVASILARRVVMEMSDSSGSESDSGNWSD) form a central and acidic domains region. Residues 555–566 (MSDSSGSESDSG) are compositionally biased toward low complexity. Over residues 578–590 (KTLKTKRERRKIL) the composition is skewed to basic residues. The span at 591-602 (NNRNSQKPSFVK) shows a compositional bias: polar residues.

In terms of assembly, homodimer.

It is found in the cell surface. Functionally, recruits and activates the Arp2/3 complex, which in turn leads to actin polymerization, promoting Rickettsia motility during infection. This chain is Arp2/3 complex-activating protein rickA (rickA), found in Rickettsia montanensis.